A 266-amino-acid chain; its full sequence is MAKSLFRALVALSFLAPLWLNAAPRVITLSPANTELAFAAGITPVGVSSYSDYPPQAQKIEQVSTWQGMNLERIVALKPDLVIAWRGGNAERQVDQLASLGIKVMWVDATSIEQIANALRQLAPWSPQPDKAEQAAQSLLDQYAQLKAQYADKPKKRVFLQFGINPPFTSGKESIQNQVLEVCGGENIFKDSRVPWPQVSREQVLARSPQAIVITGGPDQIPKIKQYWGEQLKIPVIPLTSDWFERASPRIILAAQQLCNALSQVD.

Positions 1–22 (MAKSLFRALVALSFLAPLWLNA) are cleaved as a signal peptide. In terms of domain architecture, Fe/B12 periplasmic-binding spans 25–266 (RVITLSPANT…QLCNALSQVD (242 aa)). Cyanocob(III)alamin-binding positions include tyrosine 50 and 242–246 (DWFER). An intrachain disulfide couples cysteine 183 to cysteine 259.

The protein belongs to the BtuF family. As to quaternary structure, the complex is composed of two ATP-binding proteins (BtuD), two transmembrane proteins (BtuC) and a solute-binding protein (BtuF).

The protein localises to the periplasm. Its function is as follows. Part of the ABC transporter complex BtuCDF involved in vitamin B12 import. Binds vitamin B12 and delivers it to the periplasmic surface of BtuC. The protein is Vitamin B12-binding protein (btuF) of Escherichia coli (strain K12).